A 505-amino-acid chain; its full sequence is Catalase (505 aa).

The disordered stretch occupies residues 1–25 (MSRQDKKLTGVFGHPVSDRENSMTA). Active-site residues include His-56 and Asn-129. Tyr-339 serves as a coordination point for heme.

The protein belongs to the catalase family. As to quaternary structure, homodimer. Requires heme as cofactor.

It catalyses the reaction 2 H2O2 = O2 + 2 H2O. Decomposes hydrogen peroxide into water and oxygen; serves to protect cells from the toxic effects of hydrogen peroxide. This is Catalase (katA) from Staphylococcus aureus (strain MRSA252).